Reading from the N-terminus, the 204-residue chain is uncharacterized protein (204 aa).

The first 17 residues, 1-17 (MKRLVTGLLALSLFLAA), serve as a signal peptide directing secretion. The segment at 17-102 (ACGQDSDQQK…NQSSNNQKSS (86 aa)) is disordered. Cysteine 18 is lipidated: N-palmitoyl cysteine. The S-diacylglycerol cysteine moiety is linked to residue cysteine 18. Basic and acidic residues predominate over residues 23 to 70 (DQQKDSNKEKDDKAKTEQQDKKTNDSSKDKKDNKDDSKDVNKDNKDNS). A compositionally biased stretch (low complexity) spans 71–102 (ANDNQQQSNSNATNNDQNQTNNNQSSNNQKSS).

The protein localises to the cell membrane. This is an uncharacterized protein from Staphylococcus aureus (strain Mu50 / ATCC 700699).